The following is a 432-amino-acid chain: MKFTKSEALHKEALEHIVGGVNSPSRSFKAVGGGAPVAMERGKGAYFWDVDGNKYIDYLAAYGPIITGHAHPHITKAITTAAENGVLYGTPTALEVKFAKMLKEAMPALDKVRFVNSGTEAVMTTIRVARAYTGRTKIMKFAGCYHGHSDLVLVAAGSGPSTLGTPDSAGVPQSIAQEVITVPFNNIETLKEALDKWGHEVAAILVEPIVGNFGIVEPKPGFLEKVNELVHEAGALVIYDEVITAFRFMYGGAQDLLGVTPDLTALGKVIGGGLPIGAYGGKKEIMEQVAPLGPAYQAGTMAGNPASMASGIACLEVLQQEGLYEKLDELGAMLEKGILEQAAKHNIDITLNRLKGALTVYFTTNTIEDYDAAQDTDGEMFGKFFKLMLQEGVNLAPSKYEAWFLTTEHTKEDIEYTIEAVGRAFAALADNK.

Lys-268 carries the post-translational modification N6-(pyridoxal phosphate)lysine.

The protein belongs to the class-III pyridoxal-phosphate-dependent aminotransferase family. HemL subfamily. In terms of assembly, homodimer. Pyridoxal 5'-phosphate serves as cofactor.

The protein localises to the cytoplasm. It carries out the reaction (S)-4-amino-5-oxopentanoate = 5-aminolevulinate. It functions in the pathway porphyrin-containing compound metabolism; protoporphyrin-IX biosynthesis; 5-aminolevulinate from L-glutamyl-tRNA(Glu): step 2/2. The chain is Glutamate-1-semialdehyde 2,1-aminomutase 1 from Bacillus cereus (strain ZK / E33L).